The chain runs to 544 residues: POTE ankyrin domain family member B2 (544 aa).

ANK repeat units follow at residues 135-167, 168-200, 201-233, 234-266, and 267-299; these read QKRT…VLDN, KKRT…IQDE, YGNT…SKNK, CGLT…ALDR, and YGRT…SQDL. A disordered region spans residues 332–457; the sequence is SSENSNPEQD…NTGISQDEIL (126 aa). Composition is skewed to basic and acidic residues over residues 340–355 and 364–375; these read QDLK…RLKV and MSQEPEINKDCD. The segment covering 439 to 457 has biased composition (polar residues); it reads TQKQLSEEQNTGISQDEIL.

Belongs to the POTE family.

The chain is POTE ankyrin domain family member B2 (POTEB2) from Homo sapiens (Human).